A 217-amino-acid polypeptide reads, in one-letter code: MSATNKQNAASVFGRPWIFIRGVPSMKFLPPEGPTEIAFAGRSNVGKSSLINALVGHKGLARTSNTPGRTQELNYFVPDGYSGEAGDLPPMALVDMPGYGYAQAPKEQVDAWTKLVFDYLRGRSTLKRVYVLIDARHGIKKNDEDVLALLDKAAVSYQIVLTKTDKIKAAGVPRLVAETLEKIKKRPAAFPEVLSTSSEKGEGIEDLRAAIELAVTR.

Positions 33–217 constitute an EngB-type G domain; sequence GPTEIAFAGR…RAAIELAVTR (185 aa). GTP contacts are provided by residues 41 to 48, 68 to 72, 95 to 98, 162 to 165, and 196 to 198; these read GRSNVGKS, GRTQE, DMPG, TKTD, and TSS. Mg(2+)-binding residues include Ser-48 and Thr-70.

The protein belongs to the TRAFAC class TrmE-Era-EngA-EngB-Septin-like GTPase superfamily. EngB GTPase family. Requires Mg(2+) as cofactor.

Its function is as follows. Necessary for normal cell division and for the maintenance of normal septation. The polypeptide is Probable GTP-binding protein EngB (Rhizobium meliloti (strain 1021) (Ensifer meliloti)).